A 407-amino-acid polypeptide reads, in one-letter code: Myeloid cell nuclear differentiation antigen (407 aa).

Residues 1-88 (MANEYKKILL…VNNLRKERSK (88 aa)) form the Pyrin domain. Positions 122-211 (LTSEVGERIP…TRRNVPQKDP (90 aa)) are disordered. Positions 131-137 (PVAQKRK) match the Nuclear localization signal motif. A compositionally biased stretch (low complexity) spans 177-199 (HTSSSTPSNTSFAQNQQTQAQCQ). The 199-residue stretch at 196–394 (AQCQVDTRRN…CGSHSFIKVI (199 aa)) folds into the HIN-200 domain.

Participates in a ternary complex with YY1 and the YY1 target DNA element. Binds nucleolin and nucleophosmin/NPM/B23.

Its subcellular location is the nucleus. The protein resides in the cytoplasm. Its function is as follows. May act as a transcriptional activator/repressor in the myeloid lineage. Plays a role in the granulocyte/monocyte cell-specific response to interferon. Stimulates the DNA binding of the transcriptional repressor protein YY1. The sequence is that of Myeloid cell nuclear differentiation antigen (MNDA) from Macaca fascicularis (Crab-eating macaque).